The chain runs to 362 residues: 2-aminoethylphosphonate--pyruvate transaminase (362 aa).

At K193 the chain carries N6-(pyridoxal phosphate)lysine.

Belongs to the class-V pyridoxal-phosphate-dependent aminotransferase family. PhnW subfamily. As to quaternary structure, homodimer. Pyridoxal 5'-phosphate is required as a cofactor.

It carries out the reaction (2-aminoethyl)phosphonate + pyruvate = phosphonoacetaldehyde + L-alanine. In terms of biological role, involved in phosphonate degradation. In Bacteroides fragilis (strain YCH46), this protein is 2-aminoethylphosphonate--pyruvate transaminase.